The chain runs to 194 residues: Translation machinery-associated protein 22 (194 aa).

The SUI1 domain maps to 102–173 (VQIKRVERNK…DVQEWLLELY (72 aa)).

Belongs to the DENR family. As to quaternary structure, interacts with the 40S ribosomal subunit.

It is found in the cytoplasm. The sequence is that of Translation machinery-associated protein 22 (tma22) from Neosartorya fischeri (strain ATCC 1020 / DSM 3700 / CBS 544.65 / FGSC A1164 / JCM 1740 / NRRL 181 / WB 181) (Aspergillus fischerianus).